Here is a 249-residue protein sequence, read N- to C-terminus: DNA polymerase sliding clamp 1 (249 aa).

This sequence belongs to the PCNA family. Forms heterodimers with PCNA2, which then recruit PCNA3; does not form homotrimers. The heterodimers interact with RfcS homotetramers. Heterotrimer which circularizes head-to-tail (head is at N-terminus, tail is at C-terminus) to form a toroid; DNA passes through its center. Replication factor C (RFC) is required to load the toroid on the DNA. Heterotrimer interacts, probably via this subunit, with flap endonuclease 1 (fen), Hjc, Dpo4, and XPF.

Functionally, one of the sliding clamp subunits that acts as a moving platform for DNA processing. Responsible for tethering the catalytic subunit of DNA polymerase to DNA during high-speed replication. Heterotrimer stimulates the Holliday junction resolvase Hjc. DNA polymerase I, DNA ligase and the flap endonuclease may be constitutively associated with the PCNA heterotrimer forming a scanning complex able to couple DNA synthesis and Okazaki fragment maturation. The chain is DNA polymerase sliding clamp 1 from Saccharolobus solfataricus (strain ATCC 35092 / DSM 1617 / JCM 11322 / P2) (Sulfolobus solfataricus).